Reading from the N-terminus, the 427-residue chain is Adenylosuccinate synthetase (427 aa).

GTP is bound by residues 12-18 (GDEGKGK) and 40-42 (GHT). The active-site Proton acceptor is the aspartate 13. Mg(2+) is bound by residues aspartate 13 and glycine 40. IMP-binding positions include 13–16 (DEGK), 38–41 (NAGH), threonine 128, arginine 142, glutamine 223, threonine 238, and arginine 302. The Proton donor role is filled by histidine 41. 298 to 304 (VTTGRAR) contributes to the substrate binding site. Residues arginine 304, 330–332 (KLD), and 412–414 (GVG) each bind GTP.

This sequence belongs to the adenylosuccinate synthetase family. As to quaternary structure, homodimer. The cofactor is Mg(2+).

The protein localises to the cytoplasm. The catalysed reaction is IMP + L-aspartate + GTP = N(6)-(1,2-dicarboxyethyl)-AMP + GDP + phosphate + 2 H(+). Its pathway is purine metabolism; AMP biosynthesis via de novo pathway; AMP from IMP: step 1/2. In terms of biological role, plays an important role in the de novo pathway of purine nucleotide biosynthesis. Catalyzes the first committed step in the biosynthesis of AMP from IMP. In Frankia casuarinae (strain DSM 45818 / CECT 9043 / HFP020203 / CcI3), this protein is Adenylosuccinate synthetase.